A 1615-amino-acid chain; its full sequence is ABC transporter A family member 4 (1615 aa).

7 helical membrane passes run 30 to 50 (ILLP…SMII), 233 to 253 (GVFI…NIVI), 278 to 298 (SIIS…ILSA), 308 to 328 (ITLI…AFIL), 337 to 357 (YAGL…IIIG), 365 to 385 (LKLL…YVWC), and 405 to 425 (YEII…LWYL). The region spanning 182-383 (TQIQTGVDQA…PIAISVANYV (202 aa)) is the ABC transmembrane type-2 domain. The ABC transporter 1 domain occupies 492 to 727 (ISIRNLRKEF…FGVGYLLTIS (236 aa)). Residue 528–535 (GPNGSGKS) participates in ATP binding. The next 7 membrane-spanning stretches (helical) occupy residues 855–875 (IKSF…GLIL), 1022–1042 (FVAI…IAAS), 1075–1095 (IWDY…IIAV), 1106–1126 (YISG…LMSF), 1135–1155 (VGAI…ISFI), 1174–1194 (IIEY…ILAI), and 1218–1238 (LLPN…ILLI). The 236-residue stretch at 1293 to 1528 (IIFNNLYKKF…FGSGYSIEVK (236 aa)) folds into the ABC transporter 2 domain. An ATP-binding site is contributed by 1331 to 1338 (GLNGCGKS).

Belongs to the ABC transporter superfamily. ABCA family.

The protein resides in the membrane. The protein is ABC transporter A family member 4 (abcA4) of Dictyostelium discoideum (Social amoeba).